A 549-amino-acid polypeptide reads, in one-letter code: Indole-3-acetic acid-amido synthetase GH3.2 (549 aa).

This sequence belongs to the IAA-amido conjugating enzyme family. As to expression, expressed in flowers, pollen, cotyledons, stipules, true leaves, hypocotyls, and all parts of the roots except for the primary root tips.

Functionally, catalyzes the synthesis of indole-3-acetic acid (IAA)-amino acid conjugates, providing a mechanism for the plant to cope with the presence of excess auxin. Strongly reactive with Glu, Gln, Trp, Asp, Ala, Leu, Phe, Gly, Tyr, Met, Ile and Val. Little or no product formation with His, Ser, Thr, Arg, Lys, or Cys. Also active on pyruvic and butyric acid analogs of IAA, PAA and the synthetic auxin naphthaleneacetic acid (NAA). The two chlorinated synthetic auxin herbicides 2,4-D and 3,6-dichloro-o-anisic acid (dicamba) cannot be used as substrates. The protein is Indole-3-acetic acid-amido synthetase GH3.2 (GH3.2) of Arabidopsis thaliana (Mouse-ear cress).